A 257-amino-acid chain; its full sequence is Ribonuclease HII (257 aa).

In terms of domain architecture, RNase H type-2 spans 72-257 (TYIAGIDEVG…FAPIKDMIQK (186 aa)). Positions 78, 79, and 170 each coordinate a divalent metal cation.

It belongs to the RNase HII family. It depends on Mn(2+) as a cofactor. Mg(2+) serves as cofactor.

It is found in the cytoplasm. It carries out the reaction Endonucleolytic cleavage to 5'-phosphomonoester.. In terms of biological role, endonuclease that specifically degrades the RNA of RNA-DNA hybrids. The polypeptide is Ribonuclease HII (Bacillus mycoides (strain KBAB4) (Bacillus weihenstephanensis)).